Here is a 476-residue protein sequence, read N- to C-terminus: tRNA(Ile)-lysidine synthase (476 aa).

Position 30–35 (30–35 (SGGPDS)) interacts with ATP.

It belongs to the tRNA(Ile)-lysidine synthase family.

The protein resides in the cytoplasm. The enzyme catalyses cytidine(34) in tRNA(Ile2) + L-lysine + ATP = lysidine(34) in tRNA(Ile2) + AMP + diphosphate + H(+). Functionally, ligates lysine onto the cytidine present at position 34 of the AUA codon-specific tRNA(Ile) that contains the anticodon CAU, in an ATP-dependent manner. Cytidine is converted to lysidine, thus changing the amino acid specificity of the tRNA from methionine to isoleucine. This chain is tRNA(Ile)-lysidine synthase, found in Bacillus thuringiensis subsp. konkukian (strain 97-27).